We begin with the raw amino-acid sequence, 329 residues long: Deoxyhypusine hydroxylase (329 aa).

HEAT-like PBS-type repeat units lie at residues 65–91, 99–124, 232–258, and 265–292; these read LKHE…VLED, RHEA…MRDD, FRHE…ALSN, and VRHE…FLND. Residues His67, Glu68, His100, Glu101, His234, Glu235, His267, and Glu268 each contribute to the Fe cation site.

The protein belongs to the deoxyhypusine hydroxylase family. Fe(2+) serves as cofactor.

The protein resides in the cytoplasm. Its subcellular location is the nucleus. It catalyses the reaction [eIF5A protein]-deoxyhypusine + AH2 + O2 = [eIF5A protein]-hypusine + A + H2O. The protein operates within protein modification; eIF5A hypusination. In terms of biological role, catalyzes the hydroxylation of the N(6)-(4-aminobutyl)-L-lysine intermediate to form hypusine, an essential post-translational modification only found in mature eIF-5A factor. The polypeptide is Deoxyhypusine hydroxylase (Phaeosphaeria nodorum (strain SN15 / ATCC MYA-4574 / FGSC 10173) (Glume blotch fungus)).